The primary structure comprises 288 residues: 4-diphosphocytidyl-2-C-methyl-D-erythritol kinase (288 aa).

Lysine 10 is an active-site residue. Proline 94 to serine 104 is a binding site for ATP. Aspartate 136 is an active-site residue.

This sequence belongs to the GHMP kinase family. IspE subfamily.

It catalyses the reaction 4-CDP-2-C-methyl-D-erythritol + ATP = 4-CDP-2-C-methyl-D-erythritol 2-phosphate + ADP + H(+). The protein operates within isoprenoid biosynthesis; isopentenyl diphosphate biosynthesis via DXP pathway; isopentenyl diphosphate from 1-deoxy-D-xylulose 5-phosphate: step 3/6. Its function is as follows. Catalyzes the phosphorylation of the position 2 hydroxy group of 4-diphosphocytidyl-2C-methyl-D-erythritol. This chain is 4-diphosphocytidyl-2-C-methyl-D-erythritol kinase, found in Lactiplantibacillus plantarum (strain ATCC BAA-793 / NCIMB 8826 / WCFS1) (Lactobacillus plantarum).